Consider the following 221-residue polypeptide: Holliday junction branch migration complex subunit RuvA (221 aa).

A domain I region spans residues 1–61 (MQIYQFGKIV…DYTKITYGFA (61 aa)). Residues 62-139 (SFRERILFED…RFNENHKNQT (78 aa)) are domain II. Residues 133-155 (ENHKNQTEETNQDSQEKELEKKD) form a disordered region. The flexible linker stretch occupies residues 140–166 (EETNQDSQEKELEKKDDLADITIQKSN). Residues 146–155 (SQEKELEKKD) are compositionally biased toward basic and acidic residues. The segment at 167–221 (LEDKTAANLEDTLKMLGFKPRQIDYALTKVEPNENFENLIENAIKIISNAREFRN) is domain III.

The protein belongs to the RuvA family. Homotetramer. Forms an RuvA(8)-RuvB(12)-Holliday junction (HJ) complex. HJ DNA is sandwiched between 2 RuvA tetramers; dsDNA enters through RuvA and exits via RuvB. An RuvB hexamer assembles on each DNA strand where it exits the tetramer. Each RuvB hexamer is contacted by two RuvA subunits (via domain III) on 2 adjacent RuvB subunits; this complex drives branch migration. In the full resolvosome a probable DNA-RuvA(4)-RuvB(12)-RuvC(2) complex forms which resolves the HJ.

The protein localises to the cytoplasm. The RuvA-RuvB-RuvC complex processes Holliday junction (HJ) DNA during genetic recombination and DNA repair, while the RuvA-RuvB complex plays an important role in the rescue of blocked DNA replication forks via replication fork reversal (RFR). RuvA specifically binds to HJ cruciform DNA, conferring on it an open structure. The RuvB hexamer acts as an ATP-dependent pump, pulling dsDNA into and through the RuvAB complex. HJ branch migration allows RuvC to scan DNA until it finds its consensus sequence, where it cleaves and resolves the cruciform DNA. The protein is Holliday junction branch migration complex subunit RuvA of Mesomycoplasma hyopneumoniae (strain J / ATCC 25934 / NCTC 10110) (Mycoplasma hyopneumoniae).